The sequence spans 244 residues: 14-3-3 protein beta/alpha-A (244 aa).

Residue Met-1 is modified to N-acetylmethionine.

Belongs to the 14-3-3 family. Homodimer, and heterodimer with other family members.

Its subcellular location is the cytoplasm. Its function is as follows. Adapter protein implicated in the regulation of a large spectrum of both general and specialized signaling pathways. Binds to a large number of partners, usually by recognition of a phosphoserine or phosphothreonine motif. Binding generally results in the modulation of the activity of the binding partner. This chain is 14-3-3 protein beta/alpha-A (ywhab-a), found in Xenopus laevis (African clawed frog).